We begin with the raw amino-acid sequence, 158 residues long: MRFKNRLFWIAAFIAFFVDQLTKYWVVQTFSLGETLPILPGIFHFTYVTNTGAAFSLFSGKVEWLRWLSLGVSLLLIGLALLGPVLERWDQLGYGLILGGAMGNGIDRFALGYVVDFLDFRLINFAVFNMADSFISIGIVCLLLASLQKSPDSHHRSR.

Transmembrane regions (helical) follow at residues 7 to 27 (LFWI…YWVV), 38 to 58 (ILPG…FSLF), 67 to 87 (WLSL…PVLE), and 95 to 115 (GLIL…GYVV). Active-site residues include Asp-116 and Asp-132. A helical transmembrane segment spans residues 125–145 (FAVFNMADSFISIGIVCLLLA).

The protein belongs to the peptidase A8 family.

The protein localises to the cell inner membrane. The enzyme catalyses Release of signal peptides from bacterial membrane prolipoproteins. Hydrolyzes -Xaa-Yaa-Zaa-|-(S,diacylglyceryl)Cys-, in which Xaa is hydrophobic (preferably Leu), and Yaa (Ala or Ser) and Zaa (Gly or Ala) have small, neutral side chains.. It functions in the pathway protein modification; lipoprotein biosynthesis (signal peptide cleavage). Functionally, this protein specifically catalyzes the removal of signal peptides from prolipoproteins. The protein is Lipoprotein signal peptidase of Trichormus variabilis (strain ATCC 29413 / PCC 7937) (Anabaena variabilis).